The sequence spans 251 residues: MRDAETQGLVLYSRNYKEKDKLVKIFTESFGKRMFFVKNFGKSSYASSLQAFTDGKLTATINDGGFSFIEDVSEVVVYKNISADIFINAHASYIISLADAAISDNQYDPALYGFLKRSLELLDQGFDMEVVTNIFELQVLHRFGVSLNFSECAFCHKTVGPFDFSYKFSGCLCPRHFDEDLRRSHLDPNVIYLINLFQEISLDELKKISIKAEMKAKIRQFIDGLYDEYVGIHLKSKKFLDGMSGWADIMK.

The protein belongs to the RecO family.

Involved in DNA repair and RecF pathway recombination. The polypeptide is DNA repair protein RecO (Lactococcus lactis subsp. cremoris (strain SK11)).